Reading from the N-terminus, the 187-residue chain is Cytokinin riboside 5'-monophosphate phosphoribohydrolase (187 aa).

Residues Glu80, 98–99 (RK), 115–121 (GVGTLDE), and Thr127 contribute to the substrate site.

Belongs to the LOG family.

It carries out the reaction N(6)-(dimethylallyl)adenosine 5'-phosphate + H2O = N(6)-dimethylallyladenine + D-ribose 5-phosphate. The catalysed reaction is 9-ribosyl-trans-zeatin 5'-phosphate + H2O = trans-zeatin + D-ribose 5-phosphate. Catalyzes the hydrolytic removal of ribose 5'-monophosphate from nitrogen N6-modified adenosines, the final step of bioactive cytokinin synthesis. In Mycobacterium marinum (strain ATCC BAA-535 / M), this protein is Cytokinin riboside 5'-monophosphate phosphoribohydrolase.